Consider the following 94-residue polypeptide: DNA-directed RNA polymerase subunit Rpo11 (94 aa).

Belongs to the archaeal Rpo11/eukaryotic RPB11/RPC19 RNA polymerase subunit family. Part of the RNA polymerase complex.

It localises to the cytoplasm. The catalysed reaction is RNA(n) + a ribonucleoside 5'-triphosphate = RNA(n+1) + diphosphate. DNA-dependent RNA polymerase (RNAP) catalyzes the transcription of DNA into RNA using the four ribonucleoside triphosphates as substrates. The chain is DNA-directed RNA polymerase subunit Rpo11 from Thermococcus kodakarensis (strain ATCC BAA-918 / JCM 12380 / KOD1) (Pyrococcus kodakaraensis (strain KOD1)).